The chain runs to 140 residues: NADPH-dependent 7-cyano-7-deazaguanine reductase (140 aa).

C51 (thioimide intermediate) is an active-site residue. Catalysis depends on D58, which acts as the Proton donor. Substrate is bound by residues 73–75 (LES) and 92–93 (HE).

This sequence belongs to the GTP cyclohydrolase I family. QueF type 1 subfamily.

It is found in the cytoplasm. It catalyses the reaction 7-aminomethyl-7-carbaguanine + 2 NADP(+) = 7-cyano-7-deazaguanine + 2 NADPH + 3 H(+). It participates in tRNA modification; tRNA-queuosine biosynthesis. In terms of biological role, catalyzes the NADPH-dependent reduction of 7-cyano-7-deazaguanine (preQ0) to 7-aminomethyl-7-deazaguanine (preQ1). This is NADPH-dependent 7-cyano-7-deazaguanine reductase from Syntrophus aciditrophicus (strain SB).